The following is a 255-amino-acid chain: AA9 family lytic polysaccharide monooxygenase D (255 aa).

A signal peptide spans 1 to 19 (MYRTLGSIALLAGGAAAHG). The Cu(2+) site is built by histidine 18 and histidine 92. 2 disulfide bridges follow: cysteine 65–cysteine 189 and cysteine 104–cysteine 111. An N-linked (GlcNAc...) asparagine glycan is attached at asparagine 152. Residues histidine 178 and glutamine 184 each coordinate O2. Tyrosine 186 contacts Cu(2+). An N-linked (GlcNAc...) asparagine glycan is attached at asparagine 220.

This sequence belongs to the polysaccharide monooxygenase AA9 family. Cu(2+) is required as a cofactor.

It localises to the secreted. It catalyses the reaction [(1-&gt;4)-beta-D-glucosyl]n+m + reduced acceptor + O2 = 4-dehydro-beta-D-glucosyl-[(1-&gt;4)-beta-D-glucosyl]n-1 + [(1-&gt;4)-beta-D-glucosyl]m + acceptor + H2O.. Its function is as follows. Lytic polysaccharide monooxygenase (LPMO) that depolymerizes crystalline and amorphous polysaccharides via the oxidation of scissile alpha- or beta-(1-4)-glycosidic bonds, yielding specifically C1 oxidation product. Catalysis by LPMOs requires the reduction of the active-site copper from Cu(II) to Cu(I) by a reducing agent and H(2)O(2) or O(2) as a cosubstrate. Is active on regenerated amorphous cellulose (RAC) in the presence of ascorbic acid or 3-methylcatechol. Also acts on phosphoric acid swollen cellulose (PASC) as a substrate. The polypeptide is AA9 family lytic polysaccharide monooxygenase D (Thermothelomyces thermophilus (strain ATCC 42464 / BCRC 31852 / DSM 1799) (Sporotrichum thermophile)).